A 267-amino-acid chain; its full sequence is 2-oxo-hept-4-ene-1,7-dioate hydratase (267 aa).

Mg(2+)-binding residues include E106, E108, and E139.

Belongs to the hydratase/decarboxylase family. In terms of assembly, homodecamer. Mg(2+) is required as a cofactor.

It carries out the reaction (4Z)-2-oxohept-4-enedioate + H2O = (4S)-4-hydroxy-2-oxoheptanedioate. The protein operates within aromatic compound metabolism; 4-hydroxyphenylacetate degradation; pyruvate and succinate semialdehyde from 4-hydroxyphenylacetate: step 6/7. In terms of biological role, transforms 2-oxo-hept-4-ene-1,7-dioate (OHED) into 4-hydroxy-2-oxoheptanedioate, a step in the 4-hydroxyphenylacetic acid (4-HPA) degradation pathway. The protein is 2-oxo-hept-4-ene-1,7-dioate hydratase of Escherichia coli.